Reading from the N-terminus, the 458-residue chain is Argininosuccinate lyase (458 aa).

It belongs to the lyase 1 family. Argininosuccinate lyase subfamily.

Its subcellular location is the cytoplasm. It carries out the reaction 2-(N(omega)-L-arginino)succinate = fumarate + L-arginine. The protein operates within amino-acid biosynthesis; L-arginine biosynthesis; L-arginine from L-ornithine and carbamoyl phosphate: step 3/3. This chain is Argininosuccinate lyase, found in Salmonella paratyphi A (strain ATCC 9150 / SARB42).